An 84-amino-acid chain; its full sequence is Esculentin-1ISb (84 aa).

A signal peptide spans 1–22 (MFTLKKPLLLIVLLGIISLSLC). The propeptide at 23–36 (EQERAADEDEGTKI) is removed in mature form. A disulfide bridge connects residues Cys-78 and Cys-84.

In terms of tissue distribution, expressed by the skin glands.

It localises to the secreted. Has antimicrobial activity against Gram-negative bacterium E.coli ATCC 8739 (MIC=3.1 ug), against Gram positive bacteria S.aureus ATCC 6538 (MIC=3.1 ug), methicillin-resistant S.aureus ATCC 43300 (MIC=12.5 ug), B.subtilis ATCC 6633 (MIC=12.5 ug) and against fungus C.albicans ATCC 90028 (MIC=50 ug). The chain is Esculentin-1ISb from Odorrana ishikawae (Ishikawa's frog).